We begin with the raw amino-acid sequence, 188 residues long: Guanylate kinase (188 aa).

The Guanylate kinase-like domain maps to 8–188 (GRIVVLAGPS…AVAAISEILR (181 aa)). 15–22 (GPSAVGKS) is an ATP binding site.

It belongs to the guanylate kinase family.

It localises to the cytoplasm. The catalysed reaction is GMP + ATP = GDP + ADP. Functionally, essential for recycling GMP and indirectly, cGMP. The chain is Guanylate kinase from Corynebacterium jeikeium (strain K411).